Here is a 419-residue protein sequence, read N- to C-terminus: Acyl-coenzyme A thioesterase 1 (419 aa).

Catalysis depends on charge relay system residues S232, D324, and H358. Position 416 is a phosphoserine (S416).

It belongs to the C/M/P thioester hydrolase family. In terms of assembly, monomer. Expressed in liver.

Its subcellular location is the cytoplasm. It localises to the cytosol. The catalysed reaction is hexadecanoyl-CoA + H2O = hexadecanoate + CoA + H(+). It carries out the reaction dodecanoyl-CoA + H2O = dodecanoate + CoA + H(+). It catalyses the reaction tetradecanoyl-CoA + H2O = tetradecanoate + CoA + H(+). The enzyme catalyses decanoyl-CoA + H2O = decanoate + CoA + H(+). The catalysed reaction is octadecanoyl-CoA + H2O = octadecanoate + CoA + H(+). It carries out the reaction eicosanoyl-CoA + H2O = eicosanoate + CoA + H(+). It catalyses the reaction (9Z)-octadecenoyl-CoA + H2O = (9Z)-octadecenoate + CoA + H(+). The enzyme catalyses (9Z)-hexadecenoyl-CoA + H2O = (9Z)-hexadecenoate + CoA + H(+). The catalysed reaction is (9E)-octadecenoyl-CoA + H2O = (9E)-octadecenoate + CoA + H(+). Its pathway is lipid metabolism; fatty acid metabolism. Functionally, catalyzes the hydrolysis of acyl-CoAs into free fatty acids and coenzyme A (CoASH), regulating their respective intracellular levels. More active towards saturated and unsaturated long chain fatty acyl-CoAs (C12-C20). This chain is Acyl-coenzyme A thioesterase 1 (Acot1), found in Rattus norvegicus (Rat).